The sequence spans 606 residues: Mitogen-activated protein kinase kinase kinase 7 (606 aa).

The interval 1–300 (MSTASAASSS…FPGADEPLQY (300 aa)) is interaction with MAPK8IP1. One can recognise a Protein kinase domain in the interval 36 to 291 (IEVEEVVGRG…KIMTHLMRYF (256 aa)). ATP is bound by residues 42 to 50 (VGRGAFGVV) and Lys-63. A Glycyl lysine isopeptide (Lys-Gly) (interchain with G-Cter in ubiquitin) cross-link involves residue Lys-72. Asp-156 acts as the Proton acceptor in catalysis. A Glycyl lysine isopeptide (Lys-Gly) (interchain with G-Cter in ubiquitin) cross-link involves residue Lys-158. Phosphothreonine; by autocatalysis is present on residues Thr-184 and Thr-187. Ser-192 is modified (phosphoserine; by autocatalysis). Residue Lys-209 forms a Glycyl lysine isopeptide (Lys-Gly) (interchain with G-Cter in ubiquitin) linkage. 2 disordered regions span residues 301–338 (PCQY…MEQV) and 354–391 (KNQA…MSAD). Positions 306–338 (DEGQSNSATSTGSFMDIASTNTSNKSDTNMEQV) are enriched in polar residues. Low complexity predominate over residues 361–375 (SDSGRLSLGASRGSS). Residues Ser-367, Ser-389, and Ser-439 each carry the phosphoserine modification. Residues 443–452 (LTVTGTEPGQ) are compositionally biased toward polar residues. Positions 443–492 (LTVTGTEPGQVSSRSSSPSVRMITTSGPTSEKPARSLPWTPDDSTDTNGS) are disordered. The segment covering 453 to 463 (VSSRSSSPSVR) has biased composition (low complexity). Ser-455 carries the phosphoserine modification.

It belongs to the protein kinase superfamily. STE Ser/Thr protein kinase family. MAP kinase kinase kinase subfamily. Can form homodimer. Binds both upstream activators and downstream substrates in multimolecular complexes. Interacts with TAB1/MAP3K7IP1, TAB2/MAP3K7IP2 and TAB3/MAP3K7IP3. Identified in the TRIKA2 complex composed of MAP3K7/TAK1, TAB1/MAP3K7IP1 and TAB2/MAP3K7IP2. Interacts with PPM1L and PPM1B/PP2CB. Interaction with PP2A and PPP6C leads to its repressed activity. Interacts with TRAF6 and TAB1/MAP3K7IP1; during IL-1 signaling. Interacts with TAOK1 and TAOK2; interaction with TAOK2 interferes with MAP3K7 interaction with IKKA, thus preventing NF-kappa-B activation. Interacts with DYNC2I2 (via WD domains). Interacts with CYLD and RBCK1. Interacts with TGFBR1; induces MAP3K7/TAK1 activation by TRAF6. Interacts with MAPK8IP1 and SMAD6. Interacts with isoform 1 of VRK2. Interacts with DAB2; the interaction is induced by TGF-beta stimulation and may mediate TGF-beta stimulated JNK activation. Interacts with TRIM5. Part of a complex containing ITCH, NDFIP1 and MAP3K7. Interacts with PLEKHM1 (via N- and C-terminus). Found in a complex with SH3RF1, RAC2, MAP2K7/MKK7, MAPK8IP1/JIP1, MAPK8/JNK1 and MAPK9/JNK2. Interacts with SASH1. Interacts with RIPK1. It depends on Mg(2+) as a cofactor. In terms of processing, association with TAB1/MAP3K7IP1 promotes autophosphorylation at Ser-192 and subsequent activation. Association with TAB2/MAP3K7IP2, itself associated with free unanchored Lys-63 polyubiquitin chain, promotes autophosphorylation and subsequent activation of MAP3K7. Dephosphorylation at Ser-192 by PPM1B/PP2CB and at Thr-187 by PP2A and PPP6C leads to inactivation. Deubiquitinated by USP19; leading to negative regulation of TNF-alpha- and IL-1beta-triggered NF-kappa-B activation. Post-translationally, 'Lys-48'-linked polyubiquitination at Lys-72 is induced by TNFalpha, and leads to proteasomal degradation. Undergoes 'Lys-48'-linked polyubiquitination catalyzed by ITCH. 'Lys-63'-linked polyubiquitination at Lys-158 by TRIM8 does not lead to proteasomal degradation but contributes to autophosphorylation and activation. Deubiquitinated by CYLD, a protease that selectively cleaves 'Lys-63'-linked ubiquitin chains.

Its subcellular location is the cytoplasm. The protein resides in the cell membrane. It carries out the reaction L-seryl-[protein] + ATP = O-phospho-L-seryl-[protein] + ADP + H(+). It catalyses the reaction L-threonyl-[protein] + ATP = O-phospho-L-threonyl-[protein] + ADP + H(+). Activated by pro-inflammatory cytokines and in response to physical and chemical stresses, including osmotic stress, oxidative stress, arsenic and ultraviolet light irradiation. Activated by 'Lys-63'-linked polyubiquitination and by autophosphorylation. Association with TAB1/MAP3K7IP1 and TAB2/MAP3K7IP2 promotes activation through autophosphorylation, whereas PPM1B/PP2CB, PP2A and PPP6C dephosphorylation leads to inactivation. Ceramides are also able to activate MAP3K7/TAK1. Serine/threonine kinase which acts as an essential component of the MAP kinase signal transduction pathway. Plays an important role in the cascades of cellular responses evoked by changes in the environment. Mediates signal transduction of TRAF6, various cytokines including interleukin-1 (IL-1), transforming growth factor-beta (TGFB), TGFB-related factors like BMP2 and BMP4, toll-like receptors (TLR), tumor necrosis factor receptor CD40 and B-cell receptor (BCR). Once activated, acts as an upstream activator of the MKK/JNK signal transduction cascade and the p38 MAPK signal transduction cascade through the phosphorylation and activation of several MAP kinase kinases like MAP2K1/MEK1, MAP2K3/MKK3, MAP2K6/MKK6 and MAP2K7/MKK7. These MAP2Ks in turn activate p38 MAPKs and c-jun N-terminal kinases (JNKs); both p38 MAPK and JNK pathways control the transcription factors activator protein-1 (AP-1). Independently of MAP2Ks and p38 MAPKs, acts as a key activator of NF-kappa-B by promoting activation of the I-kappa-B-kinase (IKK) core complex. Mechanistically, recruited to polyubiquitin chains of RIPK2 and IKBKG/NEMO via TAB2/MAP3K7IP2 and TAB3/MAP3K7IP3, and catalyzes phosphorylation and activation of IKBKB/IKKB component of the IKK complex, leading to NF-kappa-B activation. In osmotic stress signaling, plays a major role in the activation of MAPK8/JNK1, but not that of NF-kappa-B. Promotes TRIM5 capsid-specific restriction activity. Phosphorylates RIPK1 at 'Ser-321' which positively regulates RIPK1 interaction with RIPK3 to promote necroptosis but negatively regulates RIPK1 kinase activity and its interaction with FADD to mediate apoptosis. Phosphorylates STING1 in response to cGAMP-activation, promoting association between STEEP1 and STING1 and STING1 translocation to COPII vesicles. The polypeptide is Mitogen-activated protein kinase kinase kinase 7 (Map3k7) (Rattus norvegicus (Rat)).